The chain runs to 1032 residues: Integrin alpha-4 (1032 aa).

An N-terminal signal peptide occupies residues 1–33 (MAWEARREPGPRRAAVRETVMLLLCLGVPTGRP). FG-GAP repeat units follow at residues 35 to 100 (NVDT…PGQT), 110 to 177 (NGEP…TELS), 185 to 237 (QDYV…KYKA), 238 to 291 (FLDK…EKEL), 292 to 351 (NILH…GAVM), 355 to 412 (ETNL…GISS), and 416 to 478 (QRIE…HPES). At 35–977 (NVDTESALLY…HHQRPKRYFT (943 aa)) the chain is on the extracellular side. Asparagine 79 is a glycosylation site (N-linked (GlcNAc...) asparagine). Cysteine 91 and cysteine 101 are disulfide-bonded. The N-linked (GlcNAc...) asparagine glycan is linked to asparagine 138. 2 disulfide bridges follow: cysteine 144/cysteine 165 and cysteine 183/cysteine 198. N-linked (GlcNAc...) asparagine glycosylation occurs at asparagine 229. Ca(2+) contacts are provided by aspartate 314, asparagine 316, aspartate 318, aspartate 322, aspartate 377, aspartate 379, aspartate 381, aspartate 385, aspartate 439, aspartate 441, asparagine 443, tyrosine 445, and aspartate 447. The N-linked (GlcNAc...) asparagine glycan is linked to asparagine 480. Cystine bridges form between cysteine 486–cysteine 495 and cysteine 501–cysteine 557. N-linked (GlcNAc...) asparagine glycosylation is found at asparagine 518 and asparagine 538. The SG1 motif lies at 606-616 (KKEKDIMKKTI). Cysteine 622 and cysteine 627 are disulfide-bonded. N-linked (GlcNAc...) asparagine glycosylation is found at asparagine 626, asparagine 645, and asparagine 660. Cysteine 698 and cysteine 711 are disulfide-bonded. Asparagine 806 and asparagine 821 each carry an N-linked (GlcNAc...) asparagine glycan. Intrachain disulfides connect cysteine 852–cysteine 890 and cysteine 897–cysteine 902. Residues 978–1001 (IVIISSSLLLGLIVLLLISYVMWK) traverse the membrane as a helical segment. The Cytoplasmic portion of the chain corresponds to 1002-1032 (AGFFKRQYKSILQEENRRDSWSYINSKSNDD). The GFFKR motif motif lies at 1003 to 1007 (GFFKR). Serine 1021 carries the post-translational modification Phosphoserine.

This sequence belongs to the integrin alpha chain family. As to quaternary structure, heterodimer of an alpha and a beta subunit. The alpha subunit can sometimes be cleaved into two non-covalently associated fragments. Alpha-4 associates with either beta-1 or beta-7. Alpha-4 interacts with PXN, LPXN, and TGFB1I1/HIC5. Interacts with CSPG4 through CSPG4 chondroitin sulfate glycosaminoglycan. Interacts with JAML; integrin alpha-4/beta-1 may regulate leukocyte to endothelial cells adhesion by controlling JAML homodimerization. ITGA4:ITGB1 is found in a ternary complex with CX3CR1 and CX3CL1. Interacts with MDK. ITGA4:ITGB1 interacts with MDK; this interaction mediates MDK-induced osteoblast cells migration through PXN phosphorylation. Integrin ITGA4:ITGB1 interacts with SVEP1 (via Sushi domain 21); thereby inhibits Ca(2+) intracellular signaling and as a result represses vasocontraction. ITGA4:ITGB1 interacts with SELP. ITGA4:ITGB1 interacts with BCAM. Phosphorylation on Ser-1027 inhibits PXN binding. As to expression, expressed in vascular smooth muscle cells (at protein level).

It localises to the membrane. Its function is as follows. Integrins alpha-4/beta-1 (VLA-4) and alpha-4/beta-7 are receptors for fibronectin. They recognize one or more domains within the alternatively spliced CS-1 and CS-5 regions of fibronectin. They are also receptors for VCAM1. Integrin alpha-4/beta-1 recognizes the sequence Q-I-D-S in VCAM1. Integrin alpha-4/beta-7 is also a receptor for MADCAM1. It recognizes the sequence L-D-T in MADCAM1. On activated endothelial cells integrin VLA-4 triggers homotypic aggregation for most VLA-4-positive leukocyte cell lines. It may also participate in cytolytic T-cell interactions with target cells. ITGA4:ITGB1 binds to fractalkine (CX3CL1) and may act as its coreceptor in CX3CR1-dependent fractalkine signaling. ITGA4:ITGB1 binds to PLA2G2A via a site (site 2) which is distinct from the classical ligand-binding site (site 1) and this induces integrin conformational changes and enhanced ligand binding to site 1. Integrin ITGA4:ITGB1 represses PRKCA-mediated L-type voltage-gated channel Ca(2+) influx and ROCK-mediated calcium sensitivity in vascular smooth muscle cells via its interaction with SVEP1, thereby inhibiting vasocontraction. In Homo sapiens (Human), this protein is Integrin alpha-4 (ITGA4).